A 225-amino-acid chain; its full sequence is Imidazole glycerol phosphate synthase subunit HisH (225 aa).

The 223-residue stretch at 3–225 (TIAIVDYGMG…LYRNFVDWQP (223 aa)) folds into the Glutamine amidotransferase type-1 domain. Cysteine 82 functions as the Nucleophile in the catalytic mechanism. Residues histidine 205 and glutamate 207 contribute to the active site.

In terms of assembly, heterodimer of HisH and HisF.

It is found in the cytoplasm. The catalysed reaction is 5-[(5-phospho-1-deoxy-D-ribulos-1-ylimino)methylamino]-1-(5-phospho-beta-D-ribosyl)imidazole-4-carboxamide + L-glutamine = D-erythro-1-(imidazol-4-yl)glycerol 3-phosphate + 5-amino-1-(5-phospho-beta-D-ribosyl)imidazole-4-carboxamide + L-glutamate + H(+). It catalyses the reaction L-glutamine + H2O = L-glutamate + NH4(+). It functions in the pathway amino-acid biosynthesis; L-histidine biosynthesis; L-histidine from 5-phospho-alpha-D-ribose 1-diphosphate: step 5/9. Its function is as follows. IGPS catalyzes the conversion of PRFAR and glutamine to IGP, AICAR and glutamate. The HisH subunit catalyzes the hydrolysis of glutamine to glutamate and ammonia as part of the synthesis of IGP and AICAR. The resulting ammonia molecule is channeled to the active site of HisF. This chain is Imidazole glycerol phosphate synthase subunit HisH, found in Bordetella pertussis (strain Tohama I / ATCC BAA-589 / NCTC 13251).